We begin with the raw amino-acid sequence, 84 residues long: U8-theraphotoxin-Hhn1c 2 (84 aa).

An N-terminal signal peptide occupies residues 1–21 (MKVVLLVCLVWMMAMMELVSC). 5 disulfide bridges follow: cysteine 23–cysteine 35, cysteine 29–cysteine 44, cysteine 34–cysteine 67, cysteine 54–cysteine 75, and cysteine 69–cysteine 81.

Belongs to the AVIT (prokineticin) family. In terms of tissue distribution, expressed by the venom gland.

The protein resides in the secreted. The sequence is that of U8-theraphotoxin-Hhn1c 2 from Cyriopagopus hainanus (Chinese bird spider).